Reading from the N-terminus, the 106-residue chain is uncharacterized protein (106 aa).

Residues 38–106 (KGNKKSKAAT…STHLPYHGSY (69 aa)) are disordered. Composition is skewed to basic and acidic residues over residues 57–71 (TRQE…HRPE) and 82–96 (WKKE…KETS).

The protein resides in the mitochondrion. This is an uncharacterized protein from Arabidopsis thaliana (Mouse-ear cress).